Here is a 545-residue protein sequence, read N- to C-terminus: Intercellular adhesion molecule 1 (545 aa).

An N-terminal signal peptide occupies residues 1–27 (MASTRARPMLPLLLVLVAVVIPGPVGA). Residues 28 to 492 (QVSIHPTEAF…HLTVLYHDQN (465 aa)) lie on the Extracellular side of the membrane. Ig-like C2-type domains are found at residues 41 to 103 (GGSV…QSSA) and 128 to 193 (GKNL…LDLR). Residue Asn-47 is glycosylated (N-linked (GlcNAc...) asparagine). Intrachain disulfides connect Cys-48/Cys-92, Cys-52/Cys-96, and Cys-135/Cys-186. Asn-154 carries an N-linked (GlcNAc...) asparagine glycan. The short motif at 177 to 179 (RGD) is the Cell attachment site element. N-linked (GlcNAc...) asparagine glycosylation is found at Asn-183 and Asn-202. In terms of domain architecture, Ig-like C2-type 3 spans 230–297 (GTQQKFLCSL…LRCVLELADQ (68 aa)). An intrachain disulfide couples Cys-237 to Cys-290. 6 N-linked (GlcNAc...) asparagine glycosylation sites follow: Asn-309, Asn-344, Asn-396, Asn-417, Asn-439, and Asn-464. Residues 325 to 389 (GDQVTVKCEA…FFCSAALEVD (65 aa)) enclose the Ig-like C2-type 4 domain. Cysteines 332 and 382 form a disulfide. Positions 343–365 (LNSTSPRPPTSQGTSPRPPTSQI) are disordered. 3 cysteine pairs are disulfide-bonded: Cys-414-Cys-430, Cys-430-Cys-469, and Cys-442-Cys-469. Positions 423–476 (GSQQTLTCQPQGNPAPNLTCSRKADGVPLPIGMVKSVKREMNGTYKCRAFSSRG) constitute an Ig-like C2-type 5 domain. A helical transmembrane segment spans residues 493–517 (TWVIIVGVLVLIIAGFVIVASIYTY). The Cytoplasmic segment spans residues 518 to 545 (YRQRKIRIYKLQKAQEEALKLKVQAPPP).

This sequence belongs to the immunoglobulin superfamily. ICAM family. In terms of assembly, homodimer. Interacts with MUC1 and promotes cell aggregation in epithelial cells. Interacts with ARHGEF26/SGEF. Interacts (on T cell side) with CD81, CD247 and CD9 at immunological synapses between antigen-presenting cells and T cells. In terms of processing, monoubiquitinated, which is promoted by MARCH9 and leads to endocytosis.

It is found in the membrane. ICAM proteins are ligands for the leukocyte adhesion protein LFA-1 (integrin alpha-L/beta-2). During leukocyte trans-endothelial migration, ICAM1 engagement promotes the assembly of endothelial apical cups through ARHGEF26/SGEF and RHOG activation. This chain is Intercellular adhesion molecule 1 (Icam1), found in Rattus norvegicus (Rat).